The chain runs to 1406 residues: Protein crumbs homolog 1 (1406 aa).

Positions 1 to 25 (MALKNINYLLIFYLSFSLLIYIKNS) are cleaved as a signal peptide. Topologically, residues 26-1347 (FCNKNNTRCL…DDLISDIFTT (1322 aa)) are extracellular. Residues N30, N41, and N42 are each glycosylated (N-linked (GlcNAc...) asparagine). EGF-like domains are found at residues 30–68 (NNTRCLSNSCQNNSTCKDFSKDNDCSCSDTANNLDKDCD), 70–108 (MKDPCFSNPCQGSATCVNTPGERSFLCKCPPGYSGTICE), and 110–146 (TIGSCGKNSCQHGGICHQDPIYPVCICPAGYAGRFCE). Disulfide bonds link C34/C45, C39/C54, C56/C67, C74/C85, C79/C96, C98/C107, C114/C125, C119/C134, C136/C145, C152/C163, C157/C172, C174/C183, C190/C201, C195/C210, C212/C221, C228/C239, C233/C248, C250/C259, C266/C277, and C271/C286. Residues 148–184 (DHDECASSPCQNGAVCQDGIDGYSCFCVPGYQGRHCD) form the EGF-like 4; calcium-binding domain. Positions 186–222 (EVDECASDPCKNEATCLNEIGRYTCICPHNYSGVNCE) constitute an EGF-like 5; calcium-binding domain. An N-linked (GlcNAc...) asparagine glycan is attached at N215. Residues 224–260 (EIDECWSQPCLNGATCQDALGAYFCDCAPGFLGDHCE) form the EGF-like 6; calcium-binding domain. The 38-residue stretch at 262–299 (NTDECASQPCLHGGLCVDGENRYSCNCTGSGFTGTHCE) folds into the EGF-like 7; calcium-binding domain. Residue N287 is glycosylated (N-linked (GlcNAc...) asparagine). Cystine bridges form between C288-C298, C305-C316, C310-C325, C327-C336, C343-C354, C348-C383, C385-C394, C401-C412, C406-C421, C423-C438, C445-C456, C450-C469, and C471-C480. 2 EGF-like domains span residues 301–337 (LMPLCWSKPCHNNATCEDSVDNYTCHCWPGYTGAQCE) and 339–395 (DLNE…IHCE). N313 and N322 each carry an N-linked (GlcNAc...) asparagine glycan. The EGF-like 10; calcium-binding domain maps to 397–439 (DVNECSSNPCQNGGTCENLPGNYTCHCPFDNLSRTFYGGRDCS). 3 N-linked (GlcNAc...) asparagine glycosylation sites follow: N418, N427, and N453. One can recognise an EGF-like 11 domain in the interval 441–481 (ILLGCTHQQCLNNGTCIPHFQDGQHGFSCLCPSGYTGSLCE). One can recognise a Laminin G-like 1 domain in the interval 485 to 670 (TLSFEGDGFL…GSSLNVKAGC (186 aa)). N-linked (GlcNAc...) asparagine glycans are attached at residues N550, N561, and N657. Cystine bridges form between C642-C670, C676-C687, C681-C696, and C698-C707. Positions 672-708 (RKDWCESQPCQSRGRCINLWLSYQCDCHRPYEGPNCL) constitute an EGF-like 12 domain. The 172-residue stretch at 714–885 (GRFGQDDSTG…PVLVNVTQGC (172 aa)) folds into the Laminin G-like 2 domain. 3 N-linked (GlcNAc...) asparagine glycosylation sites follow: N757, N871, and N880. Intrachain disulfides connect C851–C885, C891–C902, C896–C911, C913–C922, C928–C939, and C933–C948. EGF-like domains lie at 887-923 (GDNSCKSNPCHNGGVCHSRWDDFSCSCPALTSGKACE) and 924-960 (EVQWCGFSPCPHGAQCQPVLQGFECIANAVFNGQSGQ). Residues 950–1137 (ANAVFNGQSG…ISTNSVVTGC (188 aa)) form the Laminin G-like 3 domain. N-linked (GlcNAc...) asparagine glycosylation is found at N968, N975, and N1000. 16 disulfides stabilise this stretch: C1096/C1137, C1143/C1154, C1148/C1163, C1165/C1174, C1181/C1191, C1186/C1200, C1202/C1211, C1218/C1229, C1223/C1238, C1240/C1249, C1259/C1274, C1268/C1283, C1285/C1294, C1301/C1312, C1306/C1321, and C1323/C1332. The 37-residue stretch at 1139 to 1175 (QLNVCNSNPCLHGGNCEDIYSSYHCSCPLGWSGKHCE) folds into the EGF-like 15 domain. In terms of domain architecture, EGF-like 16; calcium-binding spans 1177-1212 (NIDECFSNPCIHGNCSDRVAAYHCTCEPGYTGVNCE). N1190 is a glycosylation site (N-linked (GlcNAc...) asparagine). EGF-like domains lie at 1214–1250 (DIDNCQSHQCANGATCISHTNGYSCLCFGNFTGKFCR) and 1255–1295 (PSTV…EWCE). N-linked (GlcNAc...) asparagine glycosylation is found at N1243, N1265, and N1273. The EGF-like 19; calcium-binding domain maps to 1297 to 1333 (DIDECASDPCVNGGLCQDLLNKFQCLCDVAFAGERCE). The chain crosses the membrane as a helical span at residues 1348 to 1368 (IGSVTVALLLILLLAIVASVV). At 1369 to 1406 (TSNKRATQGTYSPSRQEKEGSRVEMWNLMPPPAMERLI) the chain is on the cytoplasmic side. Residues 1370 to 1406 (SNKRATQGTYSPSRQEKEGSRVEMWNLMPPPAMERLI) are interaction with EPB41L5.

The protein belongs to the Crumbs protein family. In terms of assembly, component of a complex composed of PALS1, CRB1 and EPB41L5. Within the complex, interacts (via intracellular domain) with PALS1 and EPB41L5 (via FERM domain). Forms a complex with MPP4 and PALS1. Interacts with MPDZ/MUPP1 and MPP4. In terms of processing, extensively glycosylated. As to expression, preferential expression in retina, also expressed in brain, testis, fetal brain and fetal eye. Expressed at the outer limiting membrane and apical to adherens junctions in the retina.

Its subcellular location is the apical cell membrane. The protein localises to the secreted. It is found in the cell projection. The protein resides in the cilium. It localises to the photoreceptor outer segment. Its subcellular location is the photoreceptor inner segment. Plays a role in photoreceptor morphogenesis in the retina. May maintain cell polarization and adhesion. The polypeptide is Protein crumbs homolog 1 (Homo sapiens (Human)).